A 242-amino-acid polypeptide reads, in one-letter code: Pyridoxine 5'-phosphate synthase (242 aa).

Asn-7 is a binding site for 3-amino-2-oxopropyl phosphate. Residue 9 to 10 coordinates 1-deoxy-D-xylulose 5-phosphate; that stretch reads DH. Arg-18 is a binding site for 3-amino-2-oxopropyl phosphate. His-44 functions as the Proton acceptor in the catalytic mechanism. 1-deoxy-D-xylulose 5-phosphate contacts are provided by Arg-46 and His-51. Glu-71 (proton acceptor) is an active-site residue. Thr-101 serves as a coordination point for 1-deoxy-D-xylulose 5-phosphate. The active-site Proton donor is the His-192. 3-amino-2-oxopropyl phosphate-binding positions include Gly-193 and 214–215; that span reads GH.

Belongs to the PNP synthase family. In terms of assembly, homooctamer; tetramer of dimers.

The protein resides in the cytoplasm. It carries out the reaction 3-amino-2-oxopropyl phosphate + 1-deoxy-D-xylulose 5-phosphate = pyridoxine 5'-phosphate + phosphate + 2 H2O + H(+). The protein operates within cofactor biosynthesis; pyridoxine 5'-phosphate biosynthesis; pyridoxine 5'-phosphate from D-erythrose 4-phosphate: step 5/5. Functionally, catalyzes the complicated ring closure reaction between the two acyclic compounds 1-deoxy-D-xylulose-5-phosphate (DXP) and 3-amino-2-oxopropyl phosphate (1-amino-acetone-3-phosphate or AAP) to form pyridoxine 5'-phosphate (PNP) and inorganic phosphate. The protein is Pyridoxine 5'-phosphate synthase of Synechocystis sp. (strain ATCC 27184 / PCC 6803 / Kazusa).